A 145-amino-acid polypeptide reads, in one-letter code: MSRVRQLLDKLPWYTDNIHSILMYLIMGGFTTLINIVTFWLCTDVLNWDYRIANTIAWVASVLFAYFSNKKYVFESYTPTWKEKAREVSSFFGFRFLTYIVDFLVMILLISGLGINELWAKIWTNVIVLILNYVFSKWIIFKVRK.

Helical transmembrane passes span 21 to 41 (ILMY…TFWL), 52 to 69 (IANT…YFSN), 96 to 116 (FLTY…LGIN), and 121 to 141 (KIWT…WIIF).

It belongs to the GtrA family.

The protein resides in the cell membrane. Its function is as follows. Involved in the decoration of cell wall teichoic acid with galactose and glucose. The chain is Cell wall teichoic acid glycosylation protein GtcA (gtcA) from Listeria innocua serovar 6a (strain ATCC BAA-680 / CLIP 11262).